The sequence spans 456 residues: Pantothenate kinase 2, mitochondrial (456 aa).

The tract at residues 16-89 (AGRFGAPMER…TSAGRPRAEG (74 aa)) is disordered. 2 stretches are compositionally biased toward low complexity: residues 28-39 (RAAATSAAVGES) and 55-65 (SSAAPSGSGEA). 3 positions are modified to phosphoserine: serine 55, serine 56, and serine 75. Positions 154–161 (LELKDLTL) match the Nuclear export signal motif. Residue glutamate 224 is the Proton acceptor of the active site. Acetyl-CoA contacts are provided by serine 278, serine 281, and arginine 293.

This sequence belongs to the type II pantothenate kinase family. Homodimer.

The protein localises to the cytoplasm. Its subcellular location is the cytosol. The enzyme catalyses (R)-pantothenate + ATP = (R)-4'-phosphopantothenate + ADP + H(+). Its pathway is cofactor biosynthesis; coenzyme A biosynthesis; CoA from (R)-pantothenate: step 1/5. Inhibited by acetyl-CoA. Inhibited by calcium hopantenate. Activated by palmitoylcarnitine. Its function is as follows. Catalyzes the phosphorylation of pantothenate to generate 4'-phosphopantothenate in the first and rate-determining step of coenzyme A (CoA) synthesis. This Mus musculus (Mouse) protein is Pantothenate kinase 2, mitochondrial (Pank2).